A 417-amino-acid chain; its full sequence is S-inosyl-L-homocysteine hydrolase (417 aa).

2 residues coordinate substrate: D124 and E149. Residue 150-152 (TTT) participates in NAD(+) binding. 2 residues coordinate substrate: K179 and D183. NAD(+) is bound by residues N184, 213–218 (GYGWCG), E236, N271, 292–294 (SGH), and N339.

The protein belongs to the adenosylhomocysteinase family. NAD(+) is required as a cofactor.

It is found in the cytoplasm. The enzyme catalyses S-inosyl-L-homocysteine + H2O = L-homocysteine + inosine. It participates in amino-acid biosynthesis; S-adenosyl-L-methionine biosynthesis. Catalyzes the hydrolysis of S-inosyl-L-homocysteine (SIH) to L-homocysteine (Hcy) and inosine. Likely functions in a S-adenosyl-L-methionine (SAM) recycling pathway from S-adenosyl-L-homocysteine (SAH) produced from SAM-dependent methylation reactions. Can also catalyze the reverse reaction in vitro, i.e. the synthesis of SIH from Hcy and inosine. This chain is S-inosyl-L-homocysteine hydrolase, found in Methanothermobacter thermautotrophicus (strain ATCC 29096 / DSM 1053 / JCM 10044 / NBRC 100330 / Delta H) (Methanobacterium thermoautotrophicum).